A 283-amino-acid chain; its full sequence is Elongation factor Ts (283 aa).

Positions 80–83 are involved in Mg(2+) ion dislocation from EF-Tu; that stretch reads TDFV.

This sequence belongs to the EF-Ts family.

It localises to the cytoplasm. In terms of biological role, associates with the EF-Tu.GDP complex and induces the exchange of GDP to GTP. It remains bound to the aminoacyl-tRNA.EF-Tu.GTP complex up to the GTP hydrolysis stage on the ribosome. The polypeptide is Elongation factor Ts (Citrobacter koseri (strain ATCC BAA-895 / CDC 4225-83 / SGSC4696)).